Reading from the N-terminus, the 1442-residue chain is CD109 antigen (1442 aa).

The first 21 residues, 1–21 (MRSRRLLSAAHLLCLCAVALA), serve as a signal peptide directing secretion. N-linked (GlcNAc...) asparagine glycans are attached at residues Asn-67, Asn-117, Asn-246, Asn-278, Asn-370, and Asn-421. Residues 595–704 (DKSVTLMENS…TWIWLDAYMG (110 aa)) are bait region (approximate). The isoglutamyl cysteine thioester (Cys-Gln) cross-link spans 923–926 (CGEQ). N-linked (GlcNAc...) asparagine glycosylation occurs at Asn-1088. Residue Ala-1419 is the site of GPI-anchor amidated alanine attachment. Positions 1420–1442 (TDSLRRSSSLLVFCSVLLYFVQH) are cleaved as a propeptide — removed in mature form.

Belongs to the protease inhibitor I39 (alpha-2-macroglobulin) family. In terms of assembly, heterodimer; disulfide-linked. Interacts with TGFB1 and TGFBR1. Forms a heteromeric complex with TGFBR1, TGFBR2 and TGFBR3 in a ligand-independent manner. Post-translationally, N-glycosylated. In terms of processing, 2 forms of 150 (p150) and 120 kDa (p120) exist due to proteolytic degradation from a 180 kDa form.

It localises to the cell membrane. Its function is as follows. Modulates negatively TGFB1 signaling in keratinocytes. This Mus musculus (Mouse) protein is CD109 antigen (Cd109).